The sequence spans 34 residues: Photosystem II reaction center protein T (34 aa).

Residues 3–23 (SVAYILIFTLTIGTLFFAVAF) traverse the membrane as a helical segment.

Belongs to the PsbT family. As to quaternary structure, PSII is composed of 1 copy each of membrane proteins PsbA, PsbB, PsbC, PsbD, PsbE, PsbF, PsbH, PsbI, PsbJ, PsbK, PsbL, PsbM, PsbT, PsbX, PsbY, PsbZ, Psb30/Ycf12, peripheral proteins PsbO, CyanoQ (PsbQ), PsbU, PsbV and a large number of cofactors. It forms dimeric complexes.

It is found in the cellular thylakoid membrane. Found at the monomer-monomer interface of the photosystem II (PS II) dimer, plays a role in assembly and dimerization of PSII. PSII is a light-driven water plastoquinone oxidoreductase, using light energy to abstract electrons from H(2)O, generating a proton gradient subsequently used for ATP formation. The polypeptide is Photosystem II reaction center protein T (Mastigocladus laminosus (Fischerella sp.)).